A 633-amino-acid chain; its full sequence is MSYLQSVPPHDLAAHLADHDGKSVLRFITCGSVDDGKSTLIGRLLVDAKLVFEDQLTNLGRVGSSGAVNGGEIDLALLLDGLEAEREQGITIDVAYRYFATSKRKFIVADTPGHEEYTRNMVTGASTADLAVILIDSRQGILQQTRRHSYIASLLGIRHVVLAVNKIDLVEFRQSVFDEIARDYKAFAKKLGFASIQPIPIAARFGDNVISASPNTPWYKGPALLEYLETVQLDPPATERPFRFPVQLVMRPNANFRGYAGQIASGSVSVGDPVVIAKSGQRSSVKAIVTFDGNLTTAAEGEAVTLVLADEVDASRGNMLVAPAARPFVADQFQAHVIWFDANPMLPGRSYILRTETDSVSATVTALKHQVNINSFAREAAKSLQMNEVGVCNISTQAPIVFDAYKESRATGNFVFVDRVTNATVGAGMIDFPLRRADNVHWQATDVNKGARSAMKSQRPAVLWFTGLSGSGKSTIANALDRLLHARGKHTYMLDGDNVRHGLNRDLGFTEADRVENIRRVAEVAKLMADAGLIVLVSFISPFRGERRMARELMEEGEFIEIFVDTPLEECARRDPKALYEKALAGKIANFTGVSSPYEAPESPELHLKTVEEDPVALALKIEAFLDRHREEK.

Residues 1 to 458 (MSYLQSVPPH…KGARSAMKSQ (458 aa)) form a sulfate adenylyltransferase region. Positions 22 to 236 (KSVLRFITCG…YLETVQLDPP (215 aa)) constitute a tr-type G domain. Positions 31–38 (GSVDDGKS) are G1. 31 to 38 (GSVDDGKS) is a binding site for GTP. The interval 89–93 (GITID) is G2. Residues 110–113 (DTPG) are G3. Residues 110 to 114 (DTPGH) and 165 to 168 (NKID) each bind GTP. Positions 165–168 (NKID) are G4. The G5 stretch occupies residues 202 to 204 (AAR). An adenylyl-sulfate kinase region spans residues 459–633 (RPAVLWFTGL…AFLDRHREEK (175 aa)). Residue 467–474 (GLSGSGKS) coordinates ATP. Residue Ser541 is the Phosphoserine intermediate of the active site.

In the C-terminal section; belongs to the APS kinase family. The protein in the N-terminal section; belongs to the TRAFAC class translation factor GTPase superfamily. Classic translation factor GTPase family. CysN/NodQ subfamily. As to quaternary structure, sulfate-activating enzymes, NodP and NodQ, may be physically associated.

The catalysed reaction is sulfate + ATP + H(+) = adenosine 5'-phosphosulfate + diphosphate. It catalyses the reaction adenosine 5'-phosphosulfate + ATP = 3'-phosphoadenylyl sulfate + ADP + H(+). Proposed to provide activated sulfate for transfer to Nod factor. ATP sulfurylase may be the GTPase, regulating ATP sulfurylase activity. In terms of biological role, APS kinase catalyzes the synthesis of activated sulfate. The sequence is that of Bifunctional enzyme NodQ (nodQ) from Rhizobium sp. (strain BR816).